Consider the following 240-residue polypeptide: Ribonuclease 3 (240 aa).

The RNase III domain maps to 10 to 136; sequence VREFQETVGV…LIGAVYLDRG (127 aa). Residue E49 coordinates Mg(2+). Residue D53 is part of the active site. 2 residues coordinate Mg(2+): D122 and E125. E125 is an active-site residue. In terms of domain architecture, DRBM spans 163–231; the sequence is DWKTSLQELT…AESAWKAIRA (69 aa). The disordered stretch occupies residues 205 to 240; the sequence is TYGSGEGRSKKEAEQQAAESAWKAIRAATEKAKQES. Residues 219–228 show a composition bias toward low complexity; it reads QQAAESAWKA.

The protein belongs to the ribonuclease III family. As to quaternary structure, homodimer. Mg(2+) serves as cofactor.

The protein localises to the cytoplasm. The enzyme catalyses Endonucleolytic cleavage to 5'-phosphomonoester.. In terms of biological role, digests double-stranded RNA. Involved in the processing of primary rRNA transcript to yield the immediate precursors to the large and small rRNAs (23S and 16S). Processes some mRNAs, and tRNAs when they are encoded in the rRNA operon. Processes pre-crRNA and tracrRNA of type II CRISPR loci if present in the organism. The polypeptide is Ribonuclease 3 (Thermobifida fusca (strain YX)).